The following is a 122-amino-acid chain: Large ribosomal subunit protein uL14 (122 aa).

Belongs to the universal ribosomal protein uL14 family. Part of the 50S ribosomal subunit. Forms a cluster with proteins L3 and L19. In the 70S ribosome, L14 and L19 interact and together make contacts with the 16S rRNA in bridges B5 and B8.

Binds to 23S rRNA. Forms part of two intersubunit bridges in the 70S ribosome. The protein is Large ribosomal subunit protein uL14 of Ureaplasma parvum serovar 3 (strain ATCC 27815 / 27 / NCTC 11736).